The following is a 336-amino-acid chain: tRNA N6-adenosine threonylcarbamoyltransferase (336 aa).

2 residues coordinate Fe cation: H112 and H116. Substrate-binding positions include 136–140 (LVSGG), D169, G182, and N276. D304 provides a ligand contact to Fe cation.

It belongs to the KAE1 / TsaD family. Requires Fe(2+) as cofactor.

It is found in the cytoplasm. It carries out the reaction L-threonylcarbamoyladenylate + adenosine(37) in tRNA = N(6)-L-threonylcarbamoyladenosine(37) in tRNA + AMP + H(+). Its function is as follows. Required for the formation of a threonylcarbamoyl group on adenosine at position 37 (t(6)A37) in tRNAs that read codons beginning with adenine. Is involved in the transfer of the threonylcarbamoyl moiety of threonylcarbamoyl-AMP (TC-AMP) to the N6 group of A37, together with TsaE and TsaB. TsaD likely plays a direct catalytic role in this reaction. The chain is tRNA N6-adenosine threonylcarbamoyltransferase from Francisella tularensis subsp. tularensis (strain FSC 198).